Reading from the N-terminus, the 290-residue chain is Putative tyrosine recombinase TTE1313 (290 aa).

The Core-binding (CB) domain occupies 1 to 85; that stretch reads MAESVVGEFL…SIKAFYHYLF (85 aa). The Tyr recombinase domain occupies 106–290; the sequence is KEPVTLTVEQ…EVYNKFHPRA (185 aa). Arginine 239 is a catalytic residue. The active-site O-(3'-phospho-DNA)-tyrosine intermediate is tyrosine 283.

Belongs to the 'phage' integrase family.

The protein localises to the cytoplasm. Functionally, site-specific tyrosine recombinase, which acts by catalyzing the cutting and rejoining of the recombining DNA molecules. In Caldanaerobacter subterraneus subsp. tengcongensis (strain DSM 15242 / JCM 11007 / NBRC 100824 / MB4) (Thermoanaerobacter tengcongensis), this protein is Putative tyrosine recombinase TTE1313.